The primary structure comprises 355 residues: Aromatic amino acid aminotransferase (355 aa).

Lys-217 carries the N6-(pyridoxal phosphate)lysine modification.

The protein belongs to the class-II pyridoxal-phosphate-dependent aminotransferase family. As to quaternary structure, homodimer. It depends on pyridoxal 5'-phosphate as a cofactor.

The catalysed reaction is an aromatic L-alpha-amino acid + 2-oxoglutarate = an aromatic oxo-acid + L-glutamate. In terms of biological role, aminotransferase that catalyzes the conversion of aromatic amino acids and 2-oxoglutarate into corresponding aromatic oxo acids and L-glutamate. The chain is Aromatic amino acid aminotransferase from Mycolicibacterium paratuberculosis (strain ATCC BAA-968 / K-10) (Mycobacterium paratuberculosis).